Here is a 180-residue protein sequence, read N- to C-terminus: Adenine phosphoribosyltransferase (180 aa).

Ser2 carries the N-acetylserine modification. Ser15 and Ser30 each carry phosphoserine. Tyr60 carries the post-translational modification Phosphotyrosine. Ser66 carries the phosphoserine modification. N6-acetyllysine is present on Lys114. Thr135 carries the phosphothreonine modification.

Belongs to the purine/pyrimidine phosphoribosyltransferase family. Homodimer.

It localises to the cytoplasm. The catalysed reaction is AMP + diphosphate = 5-phospho-alpha-D-ribose 1-diphosphate + adenine. It functions in the pathway purine metabolism; AMP biosynthesis via salvage pathway; AMP from adenine: step 1/1. In terms of biological role, catalyzes a salvage reaction resulting in the formation of AMP, that is energically less costly than de novo synthesis. The protein is Adenine phosphoribosyltransferase of Mus musculus (Mouse).